The chain runs to 386 residues: MVYSSGSWRDAYKGMSSDNVKGLVLALSSSIFIGASFIVKKKGLKKAGASGLRAGSGGYSYLLEPLWWIGMITMIVGEIANFAAYAFAPAILVTPLGALSIIISASLAHIILQEKLHTFGILGCALCIVGSVTIVLHAPQEQDIVSVLEVWNLATEPAFLFYAAAVVGAAIVLIVQFIPLYGQSHVMVYIGVCSLIGSLSVMSVKALGIALKLTFSGTNQLGYPQTWVFTVIVLFCVITQMNYLNKALDTFNTAVVSPIYYVMFTSLTILASVIMFKDWDRQSGTQIMTELCGFVTILSGTFLLHTTTDMVDGESKGNLSSEEDSHLLLRIPKHSEDSNGFVQDGIILSLRRQESAKSPRPARQNKQLEDDLEAVPLRRQESSLRS.

Residues 1–18 (MVYSSGSWRDAYKGMSSD) lie on the Extracellular side of the membrane. Residues 19-39 (NVKGLVLALSSSIFIGASFIV) form a helical membrane-spanning segment. Residues 40 to 61 (KKKGLKKAGASGLRAGSGGYSY) lie on the Cytoplasmic side of the membrane. 2 helical membrane passes run 62-82 (LLEPLWWIGMITMIVGEIANF) and 83-103 (AAYAFAPAILVTPLGALSIII). Residues 104 to 115 (SASLAHIILQEK) lie on the Cytoplasmic side of the membrane. Residues 116–136 (LHTFGILGCALCIVGSVTIVL) traverse the membrane as a helical segment. Residues 137–157 (HAPQEQDIVSVLEVWNLATEP) lie on the Extracellular side of the membrane. The chain crosses the membrane as a helical span at residues 158–178 (AFLFYAAAVVGAAIVLIVQFI). At 179–189 (PLYGQSHVMVY) the chain is on the cytoplasmic side. The helical transmembrane segment at 190-210 (IGVCSLIGSLSVMSVKALGIA) threads the bilayer. At 211-220 (LKLTFSGTNQ) the chain is on the extracellular side. Residues 221–241 (LGYPQTWVFTVIVLFCVITQM) traverse the membrane as a helical segment. The Cytoplasmic portion of the chain corresponds to 242–255 (NYLNKALDTFNTAV). A helical membrane pass occupies residues 256–276 (VSPIYYVMFTSLTILASVIMF). The Extracellular segment spans residues 277-283 (KDWDRQS). Residues 284–304 (GTQIMTELCGFVTILSGTFLL) traverse the membrane as a helical segment. Residues 305-386 (HTTTDMVDGE…LRRQESSLRS (82 aa)) lie on the Cytoplasmic side of the membrane. The interval 352–386 (RQESAKSPRPARQNKQLEDDLEAVPLRRQESSLRS) is disordered. Positions 376–386 (PLRRQESSLRS) are enriched in basic and acidic residues.

Belongs to the NIPA (TC 2.A.7) family. As to quaternary structure, homodimer.

Its subcellular location is the cell membrane. It is found in the early endosome. Acts as a Mg(2+) transporter. Can also transport other divalent cations such as Fe(2+), Sr(2+), Ba(2+), Mn(2+) and Co(2+) but to a much less extent than Mg(2+). This is Probable magnesium transporter NIPA5 from Arabidopsis thaliana (Mouse-ear cress).